A 191-amino-acid polypeptide reads, in one-letter code: MIWDTDSIIQAYAQGYFLMSDEEGTLGWYTSSQRTLIPLDDRFRYPKSLQRVLNQERFTVAINRDFPAVCWGCANRETTWISHELIEIYLQLNQAGWAFSFETWQGNQLAGGILGIAIRGAFIGESMFYNIPDGSKVAMVKLVEHLRARGFVLFDAQLQNPHLARFGSYGISDREYKLLLRKALSSKCHLI.

Belongs to the L/F-transferase family.

It is found in the cytoplasm. The catalysed reaction is N-terminal L-lysyl-[protein] + L-leucyl-tRNA(Leu) = N-terminal L-leucyl-L-lysyl-[protein] + tRNA(Leu) + H(+). It carries out the reaction N-terminal L-arginyl-[protein] + L-leucyl-tRNA(Leu) = N-terminal L-leucyl-L-arginyl-[protein] + tRNA(Leu) + H(+). It catalyses the reaction L-phenylalanyl-tRNA(Phe) + an N-terminal L-alpha-aminoacyl-[protein] = an N-terminal L-phenylalanyl-L-alpha-aminoacyl-[protein] + tRNA(Phe). Its function is as follows. Functions in the N-end rule pathway of protein degradation where it conjugates Leu, Phe and, less efficiently, Met from aminoacyl-tRNAs to the N-termini of proteins containing an N-terminal arginine or lysine. The polypeptide is Leucyl/phenylalanyl-tRNA--protein transferase (Gloeothece citriformis (strain PCC 7424) (Cyanothece sp. (strain PCC 7424))).